The chain runs to 528 residues: Protein phosphatase 1 regulatory subunit 16A (528 aa).

The stretch at 18-45 (STQERLKHAQKRRAQQVKMWAQAEKEAQ) forms a coiled coil. Residues 19-59 (TQERLKHAQKRRAQQVKMWAQAEKEAQGKKGPGERPRKEAA) form a disordered region. The segment covering 40-58 (AEKEAQGKKGPGERPRKEA) has biased composition (basic and acidic residues). 5 ANK repeats span residues 70–99 (PPSV…SPDL), 103–132 (DGLT…NINA), 136–165 (ECWT…NLLA), 231–260 (HGAT…SLSA), and 264–293 (DGWE…DLNA). Disordered stretches follow at residues 330–351 (RQRS…VVRR) and 367–421 (QEAI…SPVR). Phosphoserine is present on S433. A disordered region spans residues 462 to 505 (QRAAAKLQRPPPEGPESPETAEPGLPGDTVTPQPDCGFRAGGDP). C524 carries the S-palmitoyl cysteine lipid modification. C525 is subject to Cysteine methyl ester. Residue C525 is the site of S-farnesyl cysteine attachment. Positions 526-528 (LLM) are cleaved as a propeptide — removed in mature form.

In terms of assembly, binds PP1.

It is found in the cell membrane. Its function is as follows. Inhibits protein phosphatase 1 activity toward phosphorylase, myosin light chain and myosin substrates. This Homo sapiens (Human) protein is Protein phosphatase 1 regulatory subunit 16A (PPP1R16A).